We begin with the raw amino-acid sequence, 159 residues long: Phosphopantetheine adenylyltransferase (159 aa).

Position 9 (Thr-9) interacts with substrate. ATP-binding positions include 9-10 and His-17; that span reads TF. Residues Lys-41, Leu-73, and Arg-87 each coordinate substrate. ATP-binding positions include 88–90, Glu-98, and 123–129; these read GLR and YSYISST.

The protein belongs to the bacterial CoaD family. In terms of assembly, homohexamer. Mg(2+) serves as cofactor.

The protein localises to the cytoplasm. The enzyme catalyses (R)-4'-phosphopantetheine + ATP + H(+) = 3'-dephospho-CoA + diphosphate. It functions in the pathway cofactor biosynthesis; coenzyme A biosynthesis; CoA from (R)-pantothenate: step 4/5. Its function is as follows. Reversibly transfers an adenylyl group from ATP to 4'-phosphopantetheine, yielding dephospho-CoA (dPCoA) and pyrophosphate. The protein is Phosphopantetheine adenylyltransferase of Azotobacter vinelandii (strain DJ / ATCC BAA-1303).